Here is a 525-residue protein sequence, read N- to C-terminus: MAEPLRTHRVVVVGAGIAGLTSALLLAARGLDVTLVDKAATPGGKMRQVMVDGAPVDAGPTVFTMRWVFDQIFAAAGATVEEHLKLQPLGVLARHAWRGHEPRLDLFADIRRSAEAIGEFSGPQEAQRFLGFCRQARQLYDHLEGPYIRSERPTLGSMVGDLGPRGLMALMQIGPFSNLWRSLSRHFRDPKLQQLFARYATYCGASPWMAPATLMLVAQVELDGVWAVEGGMHAVAKAFSALAEARGVKTRYGCGCEQILVRDGRAVGVRLAGGEEITADSVVFNGDVNALAQGLLGDPPRRATAAVAPARRSLSALTWLVNARTSGFPLVRHNVFFDEDYASEFDDIFRQRQLPRRGTVYVCAQDRTDEGIGSDAPERLLCLVNAPADGDRRPFDHSETDPCEQRSLALMRECGLTIDWSPQTHRLVTPANFERLFPATGGALYGPATHGWMSSFHRASSTSRLPGLYLAGGSVHPGPGVPMAAMSGRLAAETLMAHLDSTSRSRRVVISGGMSTRSATTGGMA.

The protein belongs to the carotenoid/retinoid oxidoreductase family.

The enzyme catalyses rhodopin + A = (3E)-3,4-didehydrorhodopin + AH2. It participates in carotenoid biosynthesis; spheroidene biosynthesis. Its function is as follows. Catalyzes the introduction of C-3,4 double bonds into 1-hydroxyneurosporene (1-HO-Neu) to yield demethylspheroidene (DMS). The preferred substrates are 1-hydroxy-neurosporene, 1-hydroxy-lycopene and 1,1-dihydroxyneurosporene, however the 3,4-didehydrolycopene derivatives such as 1,1-dihydroxy-3,4-didehydrolycopene, 1-methoxy-1-hydroxy-3,4-didehydrolycopene and 1-hydroxy-3,4-didehydrolycopene are also efficiently converted. 1-HO-carotene derivatives can be also used. The polypeptide is Hydroxyneurosporene desaturase (crtD) (Rubrivivax gelatinosus (Rhodocyclus gelatinosus)).